A 375-amino-acid polypeptide reads, in one-letter code: 1-deoxy-D-xylulose 5-phosphate reductoisomerase (375 aa).

The NADPH site is built by threonine 10, glycine 11, serine 12, valine 13, lysine 37, and asparagine 114. Lysine 115 contributes to the 1-deoxy-D-xylulose 5-phosphate binding site. Glutamate 116 lines the NADPH pocket. Residue aspartate 136 participates in Mn(2+) binding. 1-deoxy-D-xylulose 5-phosphate contacts are provided by serine 137, glutamate 138, serine 162, and histidine 185. Glutamate 138 contacts Mn(2+). Glycine 191 serves as a coordination point for NADPH. 1-deoxy-D-xylulose 5-phosphate contacts are provided by serine 198, asparagine 203, lysine 204, and glutamate 207. Glutamate 207 contributes to the Mn(2+) binding site.

The protein belongs to the DXR family. Mg(2+) serves as cofactor. Requires Mn(2+) as cofactor.

It carries out the reaction 2-C-methyl-D-erythritol 4-phosphate + NADP(+) = 1-deoxy-D-xylulose 5-phosphate + NADPH + H(+). The protein operates within isoprenoid biosynthesis; isopentenyl diphosphate biosynthesis via DXP pathway; isopentenyl diphosphate from 1-deoxy-D-xylulose 5-phosphate: step 1/6. Catalyzes the NADPH-dependent rearrangement and reduction of 1-deoxy-D-xylulose-5-phosphate (DXP) to 2-C-methyl-D-erythritol 4-phosphate (MEP). This chain is 1-deoxy-D-xylulose 5-phosphate reductoisomerase, found in Sulfurihydrogenibium sp. (strain YO3AOP1).